The chain runs to 138 residues: Secreted RxLR effector protein 51 (138 aa).

A signal peptide spans 1 to 19; the sequence is MRSSTILFVLGVAMVAVNG. The RxLR-dEER signature appears at 38-53; it reads RLLRSNSGKHKTDEER. An N-linked (GlcNAc...) asparagine glycan is attached at Asn-101.

The protein belongs to the RxLR effector family.

Its subcellular location is the secreted. The protein resides in the host nucleus. Its function is as follows. Secreted effector that completely suppresses the host cell death induced by cell death-inducing proteins. The chain is Secreted RxLR effector protein 51 from Plasmopara viticola (Downy mildew of grapevine).